The primary structure comprises 246 residues: Bis(5'-nucleosyl)-tetraphosphatase PrpE [asymmetrical] (246 aa).

It belongs to the PrpE family. The cofactor is Ni(2+).

It catalyses the reaction P(1),P(4)-bis(5'-guanosyl) tetraphosphate + H2O = GMP + GTP + 2 H(+). Asymmetrically hydrolyzes Ap4p to yield AMP and ATP. This Bacillus mycoides (strain KBAB4) (Bacillus weihenstephanensis) protein is Bis(5'-nucleosyl)-tetraphosphatase PrpE [asymmetrical].